Consider the following 210-residue polypeptide: Acetoin utilization protein AcuA (210 aa).

In terms of domain architecture, N-acetyltransferase spans 19-189; sequence VLIEGPISPE…ANCLMARIGK (171 aa).

The protein belongs to the acetyltransferase family. Monomer.

It functions in the pathway ketone degradation; acetoin degradation. In terms of biological role, part of the acuABC operon, which is possibly involved in the breakdown of acetoin and butanediol. Acts as an acetyltransferase inactivating acetyl-CoA synthetase AcsA via acetylation at a Lys residue. This Bacillus licheniformis (strain ATCC 14580 / DSM 13 / JCM 2505 / CCUG 7422 / NBRC 12200 / NCIMB 9375 / NCTC 10341 / NRRL NRS-1264 / Gibson 46) protein is Acetoin utilization protein AcuA.